Here is a 236-residue protein sequence, read N- to C-terminus: 2,3,4,5-tetrahydropyridine-2,6-dicarboxylate N-acetyltransferase (236 aa).

The protein belongs to the transferase hexapeptide repeat family. DapH subfamily.

It carries out the reaction (S)-2,3,4,5-tetrahydrodipicolinate + acetyl-CoA + H2O = L-2-acetamido-6-oxoheptanedioate + CoA. It functions in the pathway amino-acid biosynthesis; L-lysine biosynthesis via DAP pathway; LL-2,6-diaminopimelate from (S)-tetrahydrodipicolinate (acetylase route): step 1/3. Catalyzes the transfer of an acetyl group from acetyl-CoA to tetrahydrodipicolinate. The chain is 2,3,4,5-tetrahydropyridine-2,6-dicarboxylate N-acetyltransferase from Clostridium beijerinckii (strain ATCC 51743 / NCIMB 8052) (Clostridium acetobutylicum).